The sequence spans 52 residues: Insulin (52 aa).

Disulfide bonds link Cys-9–Cys-38, Cys-21–Cys-51, and Cys-37–Cys-42.

The protein belongs to the insulin family. As to quaternary structure, heterodimer of a B chain and an A chain linked by two disulfide bonds.

The protein resides in the secreted. In terms of biological role, insulin decreases blood glucose concentration. It increases cell permeability to monosaccharides, amino acids and fatty acids. It accelerates glycolysis, the pentose phosphate cycle, and glycogen synthesis in liver. The sequence is that of Insulin (ins) from Piaractus mesopotamicus (Small-scaled pacu).